The chain runs to 184 residues: Ribosome-recycling factor (184 aa).

Belongs to the RRF family.

It localises to the cytoplasm. Responsible for the release of ribosomes from messenger RNA at the termination of protein biosynthesis. May increase the efficiency of translation by recycling ribosomes from one round of translation to another. In Borrelia hermsii (strain HS1 / DAH), this protein is Ribosome-recycling factor.